Reading from the N-terminus, the 210-residue chain is V-type sodium ATPase subunit D (210 aa).

This sequence belongs to the V-ATPase D subunit family.

Involved in ATP-driven sodium extrusion. This chain is V-type sodium ATPase subunit D (ntpD), found in Enterococcus hirae (strain ATCC 9790 / DSM 20160 / JCM 8729 / LMG 6399 / NBRC 3181 / NCIMB 6459 / NCDO 1258 / NCTC 12367 / WDCM 00089 / R).